A 267-amino-acid chain; its full sequence is Placental prolactin-related protein 2 (267 aa).

N-linked (GlcNAc...) asparagine glycans are attached at residues asparagine 99 and asparagine 121. Disulfide bonds link cysteine 126–cysteine 244 and cysteine 261–cysteine 267.

It belongs to the somatotropin/prolactin family.

The protein resides in the secreted. In terms of biological role, placental prolactin-related proteins may play a specific role during gestation. The chain is Placental prolactin-related protein 2 (PRP2) from Bos taurus (Bovine).